A 272-amino-acid chain; its full sequence is Putative phosphoenolpyruvate synthase regulatory protein (272 aa).

Gly152–Thr159 provides a ligand contact to ADP.

It belongs to the pyruvate, phosphate/water dikinase regulatory protein family. PSRP subfamily.

It carries out the reaction [pyruvate, water dikinase] + ADP = [pyruvate, water dikinase]-phosphate + AMP + H(+). The enzyme catalyses [pyruvate, water dikinase]-phosphate + phosphate + H(+) = [pyruvate, water dikinase] + diphosphate. Bifunctional serine/threonine kinase and phosphorylase involved in the regulation of the phosphoenolpyruvate synthase (PEPS) by catalyzing its phosphorylation/dephosphorylation. This chain is Putative phosphoenolpyruvate synthase regulatory protein, found in Pseudomonas savastanoi pv. phaseolicola (strain 1448A / Race 6) (Pseudomonas syringae pv. phaseolicola (strain 1448A / Race 6)).